The sequence spans 694 residues: LMBR1 domain-containing protein 2 homolog (694 aa).

Topologically, residues 1-3 are extracellular; sequence MAY. The chain crosses the membrane as a helical span at residues 4 to 26; it reads LLSFGIVAALFLASISLYRYGNI. Residues 27–30 lie on the Cytoplasmic side of the membrane; that stretch reads PRQH. Residues 31-51 form a helical membrane-spanning segment; it reads ILVTLSVLTAWCFSFLIVFTI. At 52-106 the chain is on the extracellular side; the sequence is PLDVTSTLYRQCVEEHRPTPAPNVTNTSSATVGPPPQCQEPWGMVPASVFPNLWR. 2 N-linked (GlcNAc...) asparagine glycosylation sites follow: asparagine 74 and asparagine 77. The chain crosses the membrane as a helical span at residues 107–127; the sequence is IIYWSSQFLTWLIMPLMQSYL. The Cytoplasmic portion of the chain corresponds to 128 to 144; sequence KAGDFTVKGKLKSALIE. A helical transmembrane segment spans residues 145–165; the sequence is NAIYYGSYLFICGVLLIYIAV. Topologically, residues 166 to 181 are extracellular; that stretch reads KGESLDWQKLKAIASS. A helical transmembrane segment spans residues 182 to 202; that stretch reads ASNTWGLFLLILLLGYALVEV. Over 203–381 the chain is Cytoplasmic; that stretch reads PRSLWNNAKP…ECLLKAPFLK (179 aa). Residues 222–249 adopt a coiled-coil conformation; the sequence is KAAKLSTEKAEAEEHVDDILESLQGLSR. The helical transmembrane segment at 382–402 threads the bilayer; it reads TMCVLTATMSAMVVWSELTFF. At 403-426 the chain is on the extracellular side; that stretch reads SRHPVLSIFANVIYVAKESYDFFT. The helical transmembrane segment at 427 to 447 threads the bilayer; sequence IEVFSMVVLCYFFYCTYSTIL. At 448–467 the chain is on the cytoplasmic side; it reads RIRFLNLYYLAPHHQTNEHS. Residues 468-488 form a helical membrane-spanning segment; sequence LIFSGMLLCRLTPPMCLNFLG. Topologically, residues 489 to 514 are extracellular; the sequence is LIHMDTHIIPNRIMETVYTQIMGHMD. Residues 515 to 535 traverse the membrane as a helical segment; the sequence is VIGIISNGFNIYFPMCMLAFC. At 536-694 the chain is on the cytoplasmic side; that stretch reads LATWFSLGSR…PPPRGLFDDV (159 aa). The stretch at 564–592 forms a coiled coil; the sequence is ELVQEGKDLIAREKRRRQRAEEAMARRRD. The disordered stretch occupies residues 673 to 694; sequence DYEAETDGRIVGPPPRGLFDDV.

This sequence belongs to the LIMR family.

Its subcellular location is the membrane. This Drosophila melanogaster (Fruit fly) protein is LMBR1 domain-containing protein 2 homolog.